We begin with the raw amino-acid sequence, 211 residues long: MPAAICPGWAEEKHLWKQGFSSIAGLDEAGRGCLAGPVVAGAVIMPPRLKGDWVAMVRDSKVLTPEKREYLYCHIVSMAISFGVGVVDNTQIDCLGIAPATRLAMKQAVEHLDCRPDFLLVDYLKLPDIPLPQKGIVDGDALCFSIACASIIAKVSRDRLMCELEATYPGYHLAKHKGYGTALHMECISQKGISPIHRRTFAPLKSMFDVI.

The RNase H type-2 domain maps to 21–211; that stretch reads SSIAGLDEAG…APLKSMFDVI (191 aa). A divalent metal cation contacts are provided by aspartate 27, glutamate 28, and aspartate 122.

Belongs to the RNase HII family. Mn(2+) is required as a cofactor. The cofactor is Mg(2+).

The protein resides in the cytoplasm. It catalyses the reaction Endonucleolytic cleavage to 5'-phosphomonoester.. Endonuclease that specifically degrades the RNA of RNA-DNA hybrids. This chain is Ribonuclease HII, found in Dehalococcoides mccartyi (strain ATCC BAA-2266 / KCTC 15142 / 195) (Dehalococcoides ethenogenes (strain 195)).